The sequence spans 489 residues: Rhamnulokinase (489 aa).

An ATP-binding site is contributed by 13-17; that stretch reads ASSGR. Cysteines 68 and 222 form a disulfide. Residues Gly83 and 236–238 contribute to the substrate site; that span reads HDT. Catalysis depends on Asp237, which acts as the Proton acceptor. Thr259 provides a ligand contact to ATP. Asn296 lines the substrate pocket. An ATP-binding site is contributed by Gln304. Cysteines 353 and 370 form a disulfide. Position 402 (Gly402) interacts with ATP. Cysteines 413 and 417 form a disulfide.

The protein belongs to the rhamnulokinase family. The cofactor is Mg(2+).

The catalysed reaction is L-rhamnulose + ATP = L-rhamnulose 1-phosphate + ADP + H(+). Its pathway is carbohydrate degradation; L-rhamnose degradation; glycerone phosphate from L-rhamnose: step 2/3. Functionally, involved in the catabolism of L-rhamnose (6-deoxy-L-mannose). Catalyzes the transfer of the gamma-phosphate group from ATP to the 1-hydroxyl group of L-rhamnulose to yield L-rhamnulose 1-phosphate. This Shigella sonnei (strain Ss046) protein is Rhamnulokinase.